We begin with the raw amino-acid sequence, 113 residues long: U11-theraphotoxin-Hhn1m (113 aa).

The N-terminal stretch at 1 to 21 (MNTVRGTFLLVFGLAASLGQA) is a signal peptide. The propeptide occupies 22–74 (DKNENRREMQKKTEQGKSYLNFAENLLLQKLEELEAKLLEKHSKKSKNSRQKR). Intrachain disulfides connect Cys75-Cys90, Cys82-Cys95, and Cys89-Cys110.

The protein belongs to the neurotoxin 14 (magi-1) family. 01 (HNTX-16) subfamily. In terms of tissue distribution, expressed by the venom gland.

The protein localises to the secreted. Its function is as follows. Probable ion channel inhibitor. This chain is U11-theraphotoxin-Hhn1m, found in Cyriopagopus hainanus (Chinese bird spider).